The following is a 541-amino-acid chain: Chaperonin GroEL, cyanelle (541 aa).

ATP contacts are provided by residues 29-32 (TLGP), 86-90 (DGTTT), Gly-413, 479-481 (NAA), and Asp-495.

It belongs to the chaperonin (HSP60) family. As to quaternary structure, forms a cylinder of 14 subunits composed of two heptameric rings stacked back-to-back. Interacts with the co-chaperonin GroES.

The protein localises to the plastid. The protein resides in the cyanelle. It carries out the reaction ATP + H2O + a folded polypeptide = ADP + phosphate + an unfolded polypeptide.. Its function is as follows. Together with its co-chaperonin GroES, plays an essential role in assisting protein folding. The GroEL-GroES system forms a nano-cage that allows encapsulation of the non-native substrate proteins and provides a physical environment optimized to promote and accelerate protein folding. The chain is Chaperonin GroEL, cyanelle from Cyanophora paradoxa.